The sequence spans 471 residues: Variant surface glycoprotein ILTAT 1.21 (471 aa).

Positions 1-21 are cleaved as a signal peptide; the sequence is MLRALLPSTTLALILAGGGHA. N-linked (GlcNAc...) asparagine glycosylation is found at Asn64 and Asn405. Residues 406 to 449 form a disordered region; the sequence is ATADECPETRCEYDSEKNECRPKKGTETTATGPGERTTPADGKA. Residues 412 to 431 are compositionally biased toward basic and acidic residues; sequence PETRCEYDSEKNECRPKKGT. N-linked (GlcNAc...) asparagine glycosylation occurs at Asn450. A lipid anchor (GPI-anchor amidated serine) is attached at Ser454. Residues 455–471 constitute a propeptide, removed in mature form; sequence DSLLIKTSPLWLAFLLF.

It localises to the cell membrane. In terms of biological role, VSG forms a coat on the surface of the parasite. The trypanosome evades the immune response of the host by expressing a series of antigenically distinct VSGs from an estimated 1000 VSG genes. The chain is Variant surface glycoprotein ILTAT 1.21 from Trypanosoma brucei brucei.